We begin with the raw amino-acid sequence, 161 residues long: EP300-interacting inhibitor of differentiation 2B (161 aa).

Disordered regions lie at residues 1–26 (MAEP…GTAS) and 54–77 (ARSM…GLAS).

As to quaternary structure, homodimer and heterodimer with EID2. Interacts with HDAC1 and HDAC2.

The protein resides in the nucleus. Functionally, acts as a repressor of MYOD-dependent transcription, glucocorticoid receptor-dependent transcription, and muscle differentiation. This chain is EP300-interacting inhibitor of differentiation 2B, found in Homo sapiens (Human).